Consider the following 319-residue polypeptide: Polyprenal reductase (319 aa).

Over 1–12 (MQLVQLLPPGVS) the chain is Cytoplasmic. Residues 13 to 33 (LLALVWLAVDAAFLTALLLYL) traverse the membrane as a helical segment. Residues 34–79 (QRGCDSGRSLLCSVFQDLIRYGKTKSGLRRPSWLQWFDIPKRCFWH) lie on the Lumenal side of the membrane. A helical transmembrane segment spans residues 80–100 (FYFVSLVWNGFLLWILLHLLL). At 101–122 (QSVPVPEWLQAVLQFLCAGSEP) the chain is on the cytoplasmic side. Residues 123 to 143 (QVLGGELSVVLAFSLLWLHSL) traverse the membrane as a helical segment. Residues 144-158 (RRLLECLFVSIFSNG) lie on the Lumenal side of the membrane. The helical transmembrane segment at 159 to 179 (VIHFVQYCFGLGYYILIGFTI) threads the bilayer. Residues 180-195 (LGYCPLDRRTAVSLDD) are Cytoplasmic-facing. A helical transmembrane segment spans residues 196–216 (LLMQGNWYHILGLTLYVWASL). At 217–266 (HQYTCHCILADLRKSASGAIINLKHAVPTGDWFEKVSCPHYFAELLIYLS) the chain is on the lumenal side. A helical transmembrane segment spans residues 267–287 (IAVVFGLLNTIWWLVVLYVLL). At 288-319 (SQALAAVLCHEFYHEKFDSYPIHRKAFIPLIF) the chain is on the cytoplasmic side.

This sequence belongs to the steroid 5-alpha reductase family. Polyprenal reductase subfamily.

It is found in the endoplasmic reticulum membrane. The enzyme catalyses a di-trans,poly-cis-dolichal + NADP(+) = a di-trans,poly-cis-polyprenal + NADPH + H(+). It carries out the reaction a 3-oxo-5alpha-steroid + NADP(+) = a 3-oxo-Delta(4)-steroid + NADPH + H(+). The catalysed reaction is androst-4-ene-3,17-dione + NADPH + H(+) = 5alpha-androstan-3,17-dione + NADP(+). It catalyses the reaction 17beta-hydroxy-5alpha-androstan-3-one + NADP(+) = testosterone + NADPH + H(+). Its pathway is protein modification; protein glycosylation. Its function is as follows. Plays a key role in early steps of protein N-linked glycosylation by being involved in the conversion of polyprenol into dolichol. Acts as a polyprenal reductase that mediates the reduction of polyprenal into dolichal in a NADP-dependent mechanism. Dolichols are required for the synthesis of dolichol-linked monosaccharides and the oligosaccharide precursor used for N-glycosylation. Also able to convert testosterone (T) into 5-alpha-dihydrotestosterone (DHT). The protein is Polyprenal reductase (srd5a3) of Xenopus laevis (African clawed frog).